The following is a 293-amino-acid chain: D-alanine--D-alanine ligase (293 aa).

Positions 98 to 291 constitute an ATP-grasp domain; that stretch reads KIIWEQHSLT…FNKLVTSIIN (194 aa). 124–177 provides a ligand contact to ATP; sequence NFPLPWAVKPTLEGSSIGISKVDNQMQLNDALMLAWQYAPYALIEQWIKGDEYT. Mg(2+) contacts are provided by D245, E258, and N260.

This sequence belongs to the D-alanine--D-alanine ligase family. Mg(2+) serves as cofactor. The cofactor is Mn(2+).

Its subcellular location is the cytoplasm. The catalysed reaction is 2 D-alanine + ATP = D-alanyl-D-alanine + ADP + phosphate + H(+). It functions in the pathway cell wall biogenesis; peptidoglycan biosynthesis. In terms of biological role, cell wall formation. In Vesicomyosocius okutanii subsp. Calyptogena okutanii (strain HA), this protein is D-alanine--D-alanine ligase.